An 841-amino-acid chain; its full sequence is Protein translocase subunit SecA (841 aa).

Residues Gln-85, 103–107 (GEGKT), and Asp-492 contribute to the ATP site. The interval 788 to 841 (EVVQGQTTAHQPQEGDEEKTVKKKPVRKVVDIGRNSPCHCGSGKKYKNCHGKTE) is disordered. Residues Cys-825, Cys-827, Cys-836, and His-837 each coordinate Zn(2+). Residues 829–841 (SGKKYKNCHGKTE) are compositionally biased toward basic residues.

This sequence belongs to the SecA family. Monomer and homodimer. Part of the essential Sec protein translocation apparatus which comprises SecA, SecYEG and auxiliary proteins SecDF. Other proteins may also be involved. Zn(2+) serves as cofactor.

It localises to the cell membrane. It is found in the cytoplasm. It catalyses the reaction ATP + H2O + cellular proteinSide 1 = ADP + phosphate + cellular proteinSide 2.. Part of the Sec protein translocase complex. Interacts with the SecYEG preprotein conducting channel. Has a central role in coupling the hydrolysis of ATP to the transfer of proteins into and across the cell membrane, serving as an ATP-driven molecular motor driving the stepwise translocation of polypeptide chains across the membrane. This Bacillus pumilus (strain SAFR-032) protein is Protein translocase subunit SecA.